Reading from the N-terminus, the 157-residue chain is Ribosomal RNA large subunit methyltransferase H (157 aa).

S-adenosyl-L-methionine-binding positions include Gly-106 and 125-130 (LSEMTF).

Belongs to the RNA methyltransferase RlmH family. As to quaternary structure, homodimer.

It localises to the cytoplasm. It carries out the reaction pseudouridine(1915) in 23S rRNA + S-adenosyl-L-methionine = N(3)-methylpseudouridine(1915) in 23S rRNA + S-adenosyl-L-homocysteine + H(+). In terms of biological role, specifically methylates the pseudouridine at position 1915 (m3Psi1915) in 23S rRNA. This chain is Ribosomal RNA large subunit methyltransferase H, found in Syntrophobacter fumaroxidans (strain DSM 10017 / MPOB).